We begin with the raw amino-acid sequence, 307 residues long: uncharacterized protein (307 aa).

To B.burgdorferi BB0340.

This is an uncharacterized protein from Treponema pallidum (strain Nichols).